The primary structure comprises 469 residues: Neuraminidase (469 aa).

At 1–6 (MNPNQK) the chain is on the intravirion side. The helical transmembrane segment at 7–27 (IITIGSICMVVGIISLILQIG) threads the bilayer. Residues 11–33 (GSICMVVGIISLILQIGNIISIW) form an involved in apical transport and lipid raft association region. Residues 28–469 (NIISIWISHS…GAELPFTIDK (442 aa)) are Virion surface-facing. Positions 36 to 90 (HSIQTGSQNHTGICNQSIITYKNSTWVNQTYVNISNTNVVAGKGTTPVILAGNSS) are hypervariable stalk region. N-linked (GlcNAc...) asparagine; by host glycans are attached at residues N44, N50, N58, N63, N68, and N88. The interval 91–469 (LCPIRGWAIY…GAELPFTIDK (379 aa)) is head of neuraminidase. 8 disulfide bridges follow: C92–C417, C124–C129, C184–C231, C233–C238, C279–C292, C281–C290, C318–C335, and C421–C446. Residue R118 participates in substrate binding. N-linked (GlcNAc...) asparagine; by host glycosylation occurs at N146. D151 serves as the catalytic Proton donor/acceptor. R152 provides a ligand contact to substrate. N-linked (GlcNAc...) asparagine; by host glycosylation is present at N235. 277–278 (EE) is a binding site for substrate. Residue R293 coordinates substrate. The Ca(2+) site is built by D294, G298, D324, and N344. N-linked (GlcNAc...) asparagine; by host glycosylation is present at N365. R368 is a substrate binding site. The Nucleophile role is filled by Y402.

This sequence belongs to the glycosyl hydrolase 34 family. As to quaternary structure, homotetramer. The cofactor is Ca(2+). Post-translationally, N-glycosylated.

Its subcellular location is the virion membrane. The protein localises to the host apical cell membrane. The catalysed reaction is Hydrolysis of alpha-(2-&gt;3)-, alpha-(2-&gt;6)-, alpha-(2-&gt;8)- glycosidic linkages of terminal sialic acid residues in oligosaccharides, glycoproteins, glycolipids, colominic acid and synthetic substrates.. Its activity is regulated as follows. Inhibited by the neuraminidase inhibitors zanamivir (Relenza) and oseltamivir (Tamiflu). These drugs interfere with the release of progeny virus from infected cells and are effective against all influenza strains. Resistance to neuraminidase inhibitors is quite rare. Functionally, catalyzes the removal of terminal sialic acid residues from viral and cellular glycoconjugates. Cleaves off the terminal sialic acids on the glycosylated HA during virus budding to facilitate virus release. Additionally helps virus spread through the circulation by further removing sialic acids from the cell surface. These cleavages prevent self-aggregation and ensure the efficient spread of the progeny virus from cell to cell. Otherwise, infection would be limited to one round of replication. Described as a receptor-destroying enzyme because it cleaves a terminal sialic acid from the cellular receptors. May facilitate viral invasion of the upper airways by cleaving the sialic acid moieties on the mucin of the airway epithelial cells. Likely to plays a role in the budding process through its association with lipid rafts during intracellular transport. May additionally display a raft-association independent effect on budding. Plays a role in the determination of host range restriction on replication and virulence. Sialidase activity in late endosome/lysosome traffic seems to enhance virus replication. In Influenza A virus (strain A/USA:Huston/AA/1945 H1N1), this protein is Neuraminidase.